A 107-amino-acid chain; its full sequence is Large ribosomal subunit protein P1 (107 aa).

Residues 67-82 are compositionally biased toward low complexity; that stretch reads GPASAAPAGAAGAAAP. The segment at 67–107 is disordered; sequence GPASAAPAGAAGAAAPAEEKAEEKEEEKEESDEDMGFGLFD. Over residues 90-101 the composition is skewed to acidic residues; that stretch reads KEEEKEESDEDM.

The protein belongs to the eukaryotic ribosomal protein P1/P2 family. In terms of assembly, P1 and P2 exist as dimers at the large ribosomal subunit.

The protein resides in the cytoplasm. Plays an important role in the elongation step of protein synthesis. The sequence is that of Large ribosomal subunit protein P1 from Penicillium crustosum (Blue mold fungus).